The primary structure comprises 308 residues: Probable pyridoxal 5'-phosphate synthase subunit pdx-1 (308 aa).

D30 contributes to the D-ribose 5-phosphate binding site. K87 acts as the Schiff-base intermediate with D-ribose 5-phosphate in catalysis. Position 159 (G159) interacts with D-ribose 5-phosphate. R171 lines the D-glyceraldehyde 3-phosphate pocket. D-ribose 5-phosphate-binding positions include G224 and 245–246 (GS).

This sequence belongs to the PdxS/SNZ family.

The catalysed reaction is aldehydo-D-ribose 5-phosphate + D-glyceraldehyde 3-phosphate + L-glutamine = pyridoxal 5'-phosphate + L-glutamate + phosphate + 3 H2O + H(+). Its pathway is cofactor biosynthesis; pyridoxal 5'-phosphate biosynthesis. Its function is as follows. Catalyzes the formation of pyridoxal 5'-phosphate from ribose 5-phosphate (RBP), glyceraldehyde 3-phosphate (G3P) and ammonia. The ammonia is provided by pdx-2. Can also use ribulose 5-phosphate and dihydroxyacetone phosphate as substrates, resulting from enzyme-catalyzed isomerization of RBP and G3P, respectively. Also plays an indirect role in resistance to singlet oxygen-generating photosensitizers. The polypeptide is Probable pyridoxal 5'-phosphate synthase subunit pdx-1 (pdx-1) (Neurospora crassa (strain ATCC 24698 / 74-OR23-1A / CBS 708.71 / DSM 1257 / FGSC 987)).